The chain runs to 242 residues: Small ribosomal subunit protein uS2 (242 aa).

This sequence belongs to the universal ribosomal protein uS2 family.

The protein is Small ribosomal subunit protein uS2 of Shouchella clausii (strain KSM-K16) (Alkalihalobacillus clausii).